We begin with the raw amino-acid sequence, 244 residues long: LexA repressor (244 aa).

Residues 1–24 (MSDSSDTTVDGASDGASDGASGAD) form a disordered region. Over residues 10–24 (DGASDGASDGASGAD) the composition is skewed to low complexity. The segment at residues 58–78 (IREIGDAVGLTSTSSVAHQLR) is a DNA-binding region (H-T-H motif). Catalysis depends on for autocatalytic cleavage activity residues Ser-168 and Lys-205.

The protein belongs to the peptidase S24 family. In terms of assembly, homodimer.

It catalyses the reaction Hydrolysis of Ala-|-Gly bond in repressor LexA.. Represses a number of genes involved in the response to DNA damage (SOS response), including recA and lexA. In the presence of single-stranded DNA, RecA interacts with LexA causing an autocatalytic cleavage which disrupts the DNA-binding part of LexA, leading to derepression of the SOS regulon and eventually DNA repair. This chain is LexA repressor, found in Mycobacterium ulcerans (strain Agy99).